Here is a 205-residue protein sequence, read N- to C-terminus: Gap junction epsilon-1 protein (205 aa).

At 1–22 (MSLNYIKNFYEGCVKPPTVIGQ) the chain is on the cytoplasmic side. The chain crosses the membrane as a helical span at residues 23–43 (FHTLFFGSVRMFFLGVLGFAV). Topologically, residues 44–74 (YGNEALHFSCDPDKREINLFCYNQFRPITPQ) are extracellular. Disulfide bonds link cysteine 53/cysteine 161 and cysteine 64/cysteine 147. Residues 75 to 95 (VFWALQLVIVLLPGAIFHLYA) traverse the membrane as a helical segment. Residues 96-111 (ACKSINQDCILQKPVY) lie on the Cytoplasmic side of the membrane. A helical transmembrane segment spans residues 112 to 132 (TVIYVLSVLLRISLEVFAFWL). Topologically, residues 133-170 (QIHLFGFQVKPIYLCDTESLGKKPNILKCMVPEHFEKT) are extracellular. A helical transmembrane segment spans residues 171 to 191 (IFLIAMYTFTVITMVLCVAEV). Residues 192–205 (FEIIFRRSCFLFKR) are Cytoplasmic-facing.

The protein belongs to the connexin family. Beta-type (group I) subfamily. In terms of assembly, a connexon is composed of a hexamer of connexins. In terms of tissue distribution, highly expressed in lens, where it is mainly found in lens fibers and to a lesser extent in lens epithelium. Weakly expressed in retina. Not detected in other tissues tested.

It localises to the cell membrane. Mediates calcium-independent ATP release, suggesting activity as a hemichannel. Does not form functional gap junctions. May play a non-essential role in eye lens development. The sequence is that of Gap junction epsilon-1 protein from Mus musculus (Mouse).